The sequence spans 381 residues: 4-hydroxy-3-methylbut-2-en-1-yl diphosphate synthase (flavodoxin) (381 aa).

Cys273, Cys276, Cys308, and Glu315 together coordinate [4Fe-4S] cluster.

The protein belongs to the IspG family. It depends on [4Fe-4S] cluster as a cofactor.

The enzyme catalyses (2E)-4-hydroxy-3-methylbut-2-enyl diphosphate + oxidized [flavodoxin] + H2O + 2 H(+) = 2-C-methyl-D-erythritol 2,4-cyclic diphosphate + reduced [flavodoxin]. Its pathway is isoprenoid biosynthesis; isopentenyl diphosphate biosynthesis via DXP pathway; isopentenyl diphosphate from 1-deoxy-D-xylulose 5-phosphate: step 5/6. Its function is as follows. Converts 2C-methyl-D-erythritol 2,4-cyclodiphosphate (ME-2,4cPP) into 1-hydroxy-2-methyl-2-(E)-butenyl 4-diphosphate. The polypeptide is 4-hydroxy-3-methylbut-2-en-1-yl diphosphate synthase (flavodoxin) (Gluconobacter oxydans (strain 621H) (Gluconobacter suboxydans)).